The sequence spans 351 residues: DNA polymerase IV (351 aa).

One can recognise a UmuC domain in the interval 4 to 185 (IIHVDMDCFF…LPLAKIPGVG (182 aa)). The Mg(2+) site is built by Asp8 and Asp103. Glu104 is a catalytic residue.

The protein belongs to the DNA polymerase type-Y family. As to quaternary structure, monomer. Requires Mg(2+) as cofactor.

It localises to the cytoplasm. The enzyme catalyses DNA(n) + a 2'-deoxyribonucleoside 5'-triphosphate = DNA(n+1) + diphosphate. Its function is as follows. Poorly processive, error-prone DNA polymerase involved in untargeted mutagenesis. Copies undamaged DNA at stalled replication forks, which arise in vivo from mismatched or misaligned primer ends. These misaligned primers can be extended by PolIV. Exhibits no 3'-5' exonuclease (proofreading) activity. May be involved in translesional synthesis, in conjunction with the beta clamp from PolIII. The polypeptide is DNA polymerase IV (Escherichia coli O157:H7).